A 733-amino-acid polypeptide reads, in one-letter code: Exosome complex exonuclease RRP6 (733 aa).

The residue at position 138 (S138) is a Phosphoserine. In terms of domain architecture, 3'-5' exonuclease spans 214-380; it reads IWVDTSTELE…NIYDQLRNKL (167 aa). The Mn(2+) site is built by D238 and E240. Residues D238 and E240 each contribute to the Zn(2+) site. Residues E240 and H241 each contribute to the AMP site. UMP is bound by residues E240 and H241. D296 contacts Mn(2+). AMP is bound by residues W299, K342, and Q345. UMP contacts are provided by W299, K342, and Q345. Residue D365 coordinates Mn(2+). D365 contributes to the Zn(2+) binding site. Residues 435-515 form the HRDC domain; the sequence is PPEREVLVRE…RDALRNIKNT (81 aa). T520 is modified (phosphothreonine). 2 positions are modified to phosphoserine: S640 and S645. The disordered stretch occupies residues 662–733; the sequence is IQKKQPAKEK…AKGKNLSFKR (72 aa). Over residues 667 to 680 the composition is skewed to basic and acidic residues; that stretch reads PAKEKGVTEKDAVD. A compositionally biased stretch (polar residues) spans 687-697; that stretch reads ILSNKPGQNNR. Short sequence motifs (nuclear localization signal) lie at residues 700–704 and 718–721; these read KKRRF and KKRR. The span at 716–733 shows a compositional bias: basic residues; sequence AAKKRRPAAKGKNLSFKR.

The protein belongs to the exosome component 10/RRP6 family. Component of the RNA exosome complex. Specifically part of the catalytically inactive RNA exosome core complex (Exo-9) which may associate with the catalytic subunits RRP6 and DIS3 in cytoplasmic- and nuclear-specific RNA exosome complex forms. Exo-9 is formed by a hexameric base ring of RNase PH domain-containing subunits and a cap ring consisting of CSL4, RRP4 and RRP40. RRP6 specifically is part of the nuclear form of the RNA exosome complex; the association appears to be mediated by Exo-9 and not by DIS3. Interacts with LRP1. Interacts with NPL3, NOP53 and PAP1.

Its subcellular location is the nucleus. It localises to the nucleolus. Nuclear-specific catalytic component of the RNA exosome complex which has 3'-&gt;5' exoribonuclease activity and participates in a multitude of cellular RNA processing and degradation events. In the nucleus, the RNA exosome complex is involved in proper maturation of stable RNA species such as rRNA, snRNA and snoRNA, in the elimination of RNA processing by-products and non-coding 'pervasive' transcripts, such as antisense RNA species and cryptic unstable transcripts (CUTs), and of mRNAs with processing defects, thereby limiting or excluding their export to the cytoplasm. The catalytic inactive RNA exosome core complex of 9 subunits (Exo-9) is proposed to play a pivotal role in the binding and presentation of RNA for ribonucleolysis, and to serve as a scaffold for the association with catalytic subunits and accessory proteins or complexes. RRP6 has 3'-5' exonuclease activity which is not modulated upon association with Exo-9 suggesting that the complex inner RNA-binding path is not used to access its active site. In Saccharomyces cerevisiae (strain ATCC 204508 / S288c) (Baker's yeast), this protein is Exosome complex exonuclease RRP6 (RRP6).